The chain runs to 301 residues: MRVVVVGTRGSALALAQTRFVVERLKETWPETEFKIRTIKTRGDQGASPREEAIFVKEIQEALLSREIDIAVHSLKDLPTESPRGLKIASVPRRQDPRDVFLGKAAKRLKDLPPGAVVGTSSVRRKAQILALRPDLVVRDLRGNVDTRLAALGNGEYDGIVLAAAGLIRLDLRNRIDEFLDPGEVLPAPGQGALALEVREGDDLAEELCYALHHPPSYHRVRAERAFLRGLGAGCLAPVGALAHVEEDGTLRLEGVLLTPDGKSFIRAEIEGDVSEAEELGLDLARDVLEQGGREILAQIR.

The residue at position 235 (cysteine 235) is an S-(dipyrrolylmethanemethyl)cysteine.

The protein belongs to the HMBS family. As to quaternary structure, monomer. Dipyrromethane is required as a cofactor.

The catalysed reaction is 4 porphobilinogen + H2O = hydroxymethylbilane + 4 NH4(+). Its pathway is porphyrin-containing compound metabolism; protoporphyrin-IX biosynthesis; coproporphyrinogen-III from 5-aminolevulinate: step 2/4. In terms of biological role, tetrapolymerization of the monopyrrole PBG into the hydroxymethylbilane pre-uroporphyrinogen in several discrete steps. This chain is Porphobilinogen deaminase, found in Thermus thermophilus (strain ATCC BAA-163 / DSM 7039 / HB27).